The sequence spans 182 residues: Adenylate kinase (182 aa).

Position 12–17 (12–17 (GAGKGT)) interacts with ATP. The tract at residues 32–61 (STGELLRKEIDLDTYLGKQVKDIMNKGELV) is NMP. AMP-binding positions include threonine 33, arginine 38, 59–61 (ELV), 85–88 (GYPR), and glutamine 92. The LID stretch occupies residues 126–132 (LRGRKDD). Arginine 127 is a binding site for ATP. Residues arginine 129 and arginine 140 each coordinate AMP. Residue glycine 168 coordinates ATP.

Belongs to the adenylate kinase family. Monomer.

Its subcellular location is the cytoplasm. The enzyme catalyses AMP + ATP = 2 ADP. It participates in purine metabolism; AMP biosynthesis via salvage pathway; AMP from ADP: step 1/1. Functionally, catalyzes the reversible transfer of the terminal phosphate group between ATP and AMP. Plays an important role in cellular energy homeostasis and in adenine nucleotide metabolism. This chain is Adenylate kinase, found in Prochlorococcus marinus (strain MIT 9515).